Reading from the N-terminus, the 429-residue chain is MTQLEYARKGEITPEMEYVAKTENIDVEKLRKNIASGKVVIPKNVHNNTLPTGIGKDLHTKINANIGSSTEMEDINVELEKLDILLKYGADAVMDLSTGPKLHEIRKAIRDKTNIPLGTVPIYEAGVETTSQDKIIVDMDDDIIFKTIINQAKEGVDFITVHCGITQDAIKAVDDSERLMGIVSRGGALTAAWIMHNERENPLYAEYDYLLEICKEHDVTLSLGDGLRPGCIHDATDIAQIRELTTLGRLVKRSQKAGVQVMVEGPGHVPITQVKANMQIQKTICSDAPFYVLGPLVTDVAPGYDHITAAIGASIAGASGADFLCYVTPAEHLCIPNKEHVKQGVIASKIAAEVSDIAKQIPSTMKREYDMAVARDNFDWEKQFELAIDGETARKYYESTSTSDEEMCSMCGDFCAIKMVKDHEKANKN.

Substrate is bound by residues Asn65, Met94, Tyr123, His162, 184–186, 225–228, and Glu264; these read SRG and DGLR. His268 lines the Zn(2+) pocket. Tyr291 serves as a coordination point for substrate. His332 is a binding site for Zn(2+). Positions 408, 411, and 415 each coordinate [4Fe-4S] cluster.

Belongs to the ThiC family. [4Fe-4S] cluster serves as cofactor.

It catalyses the reaction 5-amino-1-(5-phospho-beta-D-ribosyl)imidazole + S-adenosyl-L-methionine = 4-amino-2-methyl-5-(phosphooxymethyl)pyrimidine + CO + 5'-deoxyadenosine + formate + L-methionine + 3 H(+). It participates in cofactor biosynthesis; thiamine diphosphate biosynthesis. Functionally, catalyzes the synthesis of the hydroxymethylpyrimidine phosphate (HMP-P) moiety of thiamine from aminoimidazole ribotide (AIR) in a radical S-adenosyl-L-methionine (SAM)-dependent reaction. This chain is Phosphomethylpyrimidine synthase 1, found in Methanosphaera stadtmanae (strain ATCC 43021 / DSM 3091 / JCM 11832 / MCB-3).